The sequence spans 484 residues: Acetyl-coenzyme A carboxylase carboxyl transferase subunit beta, chloroplastic (484 aa).

Residues 223–484 enclose the CoA carboxyltransferase N-terminal domain; that stretch reads LWIQCDNCYG…LHAFFPLNKN (262 aa). Positions 227, 230, 243, and 246 each coordinate Zn(2+). A C4-type zinc finger spans residues 227–246; sequence CDNCYGLMYKKVKINVCEQC.

Belongs to the AccD/PCCB family. In terms of assembly, acetyl-CoA carboxylase is a heterohexamer composed of biotin carboxyl carrier protein, biotin carboxylase and 2 subunits each of ACCase subunit alpha and ACCase plastid-coded subunit beta (accD). The cofactor is Zn(2+).

It is found in the plastid. Its subcellular location is the chloroplast stroma. The enzyme catalyses N(6)-carboxybiotinyl-L-lysyl-[protein] + acetyl-CoA = N(6)-biotinyl-L-lysyl-[protein] + malonyl-CoA. It participates in lipid metabolism; malonyl-CoA biosynthesis; malonyl-CoA from acetyl-CoA: step 1/1. Component of the acetyl coenzyme A carboxylase (ACC) complex. Biotin carboxylase (BC) catalyzes the carboxylation of biotin on its carrier protein (BCCP) and then the CO(2) group is transferred by the transcarboxylase to acetyl-CoA to form malonyl-CoA. This is Acetyl-coenzyme A carboxylase carboxyl transferase subunit beta, chloroplastic from Capsella bursa-pastoris (Shepherd's purse).